The chain runs to 450 residues: tRNA-2-methylthio-N(6)-dimethylallyladenosine synthase (450 aa).

Residues 14 to 132 (GEFFIETWGC…FPNYLNEVKK (119 aa)) form the MTTase N-terminal domain. Residues C23, C59, C93, C169, C173, and C176 each contribute to the [4Fe-4S] cluster site. The Radical SAM core domain occupies 155 to 385 (RKNSMKAFVT…VEVVNEISAK (231 aa)). Positions 388–450 (KAYEGKIEEV…NSFSLTGEEI (63 aa)) constitute a TRAM domain.

The protein belongs to the methylthiotransferase family. MiaB subfamily. Monomer. The cofactor is [4Fe-4S] cluster.

It is found in the cytoplasm. It carries out the reaction N(6)-dimethylallyladenosine(37) in tRNA + (sulfur carrier)-SH + AH2 + 2 S-adenosyl-L-methionine = 2-methylsulfanyl-N(6)-dimethylallyladenosine(37) in tRNA + (sulfur carrier)-H + 5'-deoxyadenosine + L-methionine + A + S-adenosyl-L-homocysteine + 2 H(+). Functionally, catalyzes the methylthiolation of N6-(dimethylallyl)adenosine (i(6)A), leading to the formation of 2-methylthio-N6-(dimethylallyl)adenosine (ms(2)i(6)A) at position 37 in tRNAs that read codons beginning with uridine. This chain is tRNA-2-methylthio-N(6)-dimethylallyladenosine synthase, found in Clostridium botulinum (strain Okra / Type B1).